The following is a 149-amino-acid chain: Vesicle-associated protein 3-1 (149 aa).

At M1 the chain carries N-acetylmethionine. S2 carries the N-acetylserine; in Vesicle-associated protein 3-1, N-terminally processed modification. Positions 6 to 126 constitute an MSP domain; that stretch reads LLEIEPMYLQ…EETKLRVTYV (121 aa).

This sequence belongs to the VAMP-associated protein (VAP) (TC 9.B.17) family.

May play a role in vesicle trafficking. The sequence is that of Vesicle-associated protein 3-1 (PVA31) from Arabidopsis thaliana (Mouse-ear cress).